We begin with the raw amino-acid sequence, 634 residues long: Probable sulfate transporter 3.5 (634 aa).

Over residues 1–12 (MENTITSSTSSP) the composition is skewed to polar residues. Positions 1–25 (MENTITSSTSSPKGRGVNFSTPRGF) are disordered. Topologically, residues 1–81 (MENTITSSTS…KYDMQKLKYD (81 aa)) are cytoplasmic. A helical transmembrane segment spans residues 82–102 (VLAGITITSLAVPQGISYAKL). The Extracellular segment spans residues 103–104 (AS). A helical transmembrane segment spans residues 105-125 (IPPIIGLYSSFVPPFVYAVFG). Over 126–130 (SSNNL) the chain is Cytoplasmic. Residues 131–151 (AVGTVAACSLLIAETFGEEMI) form a helical membrane-spanning segment. Over 152–158 (KNEPELY) the chain is Extracellular. A helical transmembrane segment spans residues 159–179 (LHLIFTATLITGLFQFAMGFL). Topologically, residues 180-195 (RLGILVDFLSHSTITG) are cytoplasmic. A helical transmembrane segment spans residues 196–216 (FMGGTAIIILLQQLKGIFGLV). Residues 217-239 (HFTHKTDVVSVLHSILDNRAEWK) are Extracellular-facing. A helical membrane pass occupies residues 240–260 (WQSTLAGVCFLVFLQSTRYIK). Residues 261-265 (QRYPK) are Cytoplasmic-facing. The chain crosses the membrane as a helical span at residues 266 to 286 (LFWVSAMGPMVVVVVGCVVAY). Residues 287–321 (LVKGTAHGIATVGPLKKGLNPPSIQLLNFDSKYLG) are Extracellular-facing. The chain crosses the membrane as a helical span at residues 322 to 342 (MVFKAGIVTGLIALAEGIAIG). Residues 343–358 (RSFAVMKNEQTDGNKE) are Cytoplasmic-facing. The chain crosses the membrane as a helical span at residues 359–379 (MIAFGLMNVIGSFTSCYLTTG). Topologically, residues 380–395 (PFSKTAVNYNAGTKTP) are extracellular. Residues 396–416 (MSNVVMGVCMMLVLLFLAPLF) form a helical membrane-spanning segment. The Cytoplasmic segment spans residues 417–420 (SYTP). The chain crosses the membrane as a helical span at residues 421-441 (LVGLSAIIMSAMLGLINYEEM). Over 442–458 (YHLFKVDKFDFLVCMSA) the chain is Extracellular. The helical transmembrane segment at 459–479 (FFGVSFLSMDYGLIISVGFSI) threads the bilayer. Residues 480–634 (VRALLYVARP…FNLTTTKPEV (155 aa)) lie on the Cytoplasmic side of the membrane. In terms of domain architecture, STAS spans 508–623 (QYPASEEMLG…LSIDDAVQAC (116 aa)).

It belongs to the SLC26A/SulP transporter (TC 2.A.53) family.

The protein localises to the membrane. H(+)/sulfate cotransporter that may play a role in the regulation of sulfate assimilation. The protein is Probable sulfate transporter 3.5 (SULTR3;5) of Arabidopsis thaliana (Mouse-ear cress).